Here is a 142-residue protein sequence, read N- to C-terminus: Large ribosomal subunit protein mL43 (142 aa).

Belongs to the mitochondrion-specific ribosomal protein mL43 family. In terms of assembly, component of the mitochondrial large ribosomal subunit. Mature mitochondrial ribosomes consist of a small (37S) and a large (54S) subunit. The 37S subunit contains at least 33 different proteins and 1 molecule of RNA (15S). The 54S subunit contains at least 45 different proteins and 1 molecule of RNA (21S).

The protein resides in the mitochondrion. This is Large ribosomal subunit protein mL43 (MRPL51) from Eremothecium gossypii (strain ATCC 10895 / CBS 109.51 / FGSC 9923 / NRRL Y-1056) (Yeast).